We begin with the raw amino-acid sequence, 199 residues long: Putative acetyltransferase SAR2635 (199 aa).

It belongs to the transferase hexapeptide repeat family.

The protein is Putative acetyltransferase SAR2635 of Staphylococcus aureus (strain MRSA252).